We begin with the raw amino-acid sequence, 104 residues long: Large ribosomal subunit protein uL23 (104 aa).

The protein belongs to the universal ribosomal protein uL23 family. Part of the 50S ribosomal subunit. Contacts protein L29, and trigger factor when it is bound to the ribosome.

One of the early assembly proteins it binds 23S rRNA. One of the proteins that surrounds the polypeptide exit tunnel on the outside of the ribosome. Forms the main docking site for trigger factor binding to the ribosome. The chain is Large ribosomal subunit protein uL23 from Neisseria meningitidis serogroup B (strain ATCC BAA-335 / MC58).